The sequence spans 308 residues: Phosphoribosylaminoimidazole-succinocarboxamide synthase (308 aa).

The protein belongs to the SAICAR synthetase family.

The catalysed reaction is 5-amino-1-(5-phospho-D-ribosyl)imidazole-4-carboxylate + L-aspartate + ATP = (2S)-2-[5-amino-1-(5-phospho-beta-D-ribosyl)imidazole-4-carboxamido]succinate + ADP + phosphate + 2 H(+). It participates in purine metabolism; IMP biosynthesis via de novo pathway; 5-amino-1-(5-phospho-D-ribosyl)imidazole-4-carboxamide from 5-amino-1-(5-phospho-D-ribosyl)imidazole-4-carboxylate: step 1/2. The polypeptide is Phosphoribosylaminoimidazole-succinocarboxamide synthase (Xylella fastidiosa (strain Temecula1 / ATCC 700964)).